An 848-amino-acid chain; its full sequence is Envelope glycoprotein H (848 aa).

An N-terminal signal peptide occupies residues 1-24 (MLQPYRKMLIFAVVTVAFAMAVWS). The Virion surface segment spans residues 25-808 (TPVPATPSGV…ASYSSFKVPS (784 aa)). Asn36, Asn41, Asn45, Asn60, Asn119, Asn182, and Asn210 each carry an N-linked (GlcNAc...) asparagine; by host glycan. The tract at residues 166–191 (NPVGVVLSPPRGSPSANTTIRDDGGP) is disordered. Positions 240–303 (DTTQVVAYLG…HAGPIYKVYV (64 aa)) are interaction with gL. 4 N-linked (GlcNAc...) asparagine; by host glycosylation sites follow: Asn496, Asn672, Asn766, and Asn789. The chain crosses the membrane as a helical span at residues 809 to 829 (TYLWASIGGLLLAILILYIII). Over 830–848 (KMLCGGVTNDGYKLLLSYE) the chain is Intravirion.

Belongs to the herpesviridae glycoprotein H family. In terms of assembly, interacts with glycoprotein L (gL); this interaction is necessary for the correct processing and cell surface expression of gH. The heterodimer gH/gL seems to interact with gB trimers during fusion. N-glycosylated, O-glycosylated, and sialylated.

It localises to the virion membrane. Its subcellular location is the host cell membrane. The protein localises to the host endosome membrane. In terms of biological role, the heterodimer glycoprotein H-glycoprotein L is required for the fusion of viral and plasma membranes leading to virus entry into the host cell. Following initial binding to host receptor, membrane fusion is mediated by the fusion machinery composed of gB and the heterodimer gH/gL. May also be involved in the fusion between the virion envelope and the outer nuclear membrane during virion morphogenesis. The chain is Envelope glycoprotein H from Equus caballus (Horse).